The chain runs to 32 residues: Cytochrome b6-f complex subunit 7 (32 aa).

A helical membrane pass occupies residues 9–29 (AILSSVLVLVGLAVGFLLLKV).

Belongs to the PetM family. In terms of assembly, the 4 large subunits of the cytochrome b6-f complex are cytochrome b6, subunit IV (17 kDa polypeptide, PetD), cytochrome f and the Rieske protein, while the 4 small subunits are PetG, PetL, PetM and PetN. The complex functions as a dimer.

The protein localises to the plastid. Its subcellular location is the chloroplast thylakoid membrane. Its function is as follows. Component of the cytochrome b6-f complex, which mediates electron transfer between photosystem II (PSII) and photosystem I (PSI), cyclic electron flow around PSI, and state transitions. The protein is Cytochrome b6-f complex subunit 7 of Porphyra purpurea (Red seaweed).